A 204-amino-acid chain; its full sequence is Thymidylate kinase (204 aa).

Gly-11 to Ser-18 contacts ATP.

This sequence belongs to the thymidylate kinase family.

It carries out the reaction dTMP + ATP = dTDP + ADP. In terms of biological role, phosphorylation of dTMP to form dTDP in both de novo and salvage pathways of dTTP synthesis. This Janthinobacterium sp. (strain Marseille) (Minibacterium massiliensis) protein is Thymidylate kinase.